The following is a 294-amino-acid chain: Thymidylate synthase (294 aa).

Residues R30 and 156–157 (RR) contribute to the dUMP site. C176 functions as the Nucleophile in the catalytic mechanism. DUMP contacts are provided by residues 196–199 (RSGD), N207, and 237–239 (HVY). D199 is a (6R)-5,10-methylene-5,6,7,8-tetrahydrofolate binding site. Residue A293 participates in (6R)-5,10-methylene-5,6,7,8-tetrahydrofolate binding.

This sequence belongs to the thymidylate synthase family. In terms of assembly, homodimer.

The enzyme catalyses dUMP + (6R)-5,10-methylene-5,6,7,8-tetrahydrofolate = 7,8-dihydrofolate + dTMP. It participates in pyrimidine metabolism; dTTP biosynthesis. The sequence is that of Thymidylate synthase from Ascaris suum (Pig roundworm).